The sequence spans 363 residues: Ethanolamine kinase 1 (363 aa).

It belongs to the choline/ethanolamine kinase family.

The protein localises to the cytoplasm. The enzyme catalyses ethanolamine + ATP = phosphoethanolamine + ADP + H(+). The protein operates within phospholipid metabolism; phosphatidylethanolamine biosynthesis; phosphatidylethanolamine from ethanolamine: step 1/3. Its function is as follows. Highly specific for ethanolamine phosphorylation. May be a rate-controlling step in phosphatidylethanolamine biosynthesis. This is Ethanolamine kinase 1 (Etnk1) from Mus musculus (Mouse).